A 152-amino-acid chain; its full sequence is ALK and LTK ligand 1 (152 aa).

An N-terminal signal peptide occupies residues 1 to 23; it reads MRAEKRWHILLSMILLLITSSQC. 2 disulfide bridges follow: Cys-113-Cys-149 and Cys-127-Cys-136.

Belongs to the ALKAL family. Expressed at low level in the notochord and iridophore stripes, the eye and the swim bladder.

Its subcellular location is the secreted. The protein resides in the cell membrane. Its function is as follows. Cytokine that acts as a physiological ligand for receptor tyrosine kinases LTK and ALK. Required for iridophore development in the adult eye by acting as a receptor for LTK. The protein is ALK and LTK ligand 1 of Danio rerio (Zebrafish).